The sequence spans 482 residues: UDP-N-acetylmuramate--L-alanine ligase (482 aa).

An ATP-binding site is contributed by 115–121 (GTHGKTT).

This sequence belongs to the MurCDEF family.

It is found in the cytoplasm. It carries out the reaction UDP-N-acetyl-alpha-D-muramate + L-alanine + ATP = UDP-N-acetyl-alpha-D-muramoyl-L-alanine + ADP + phosphate + H(+). It functions in the pathway cell wall biogenesis; peptidoglycan biosynthesis. Its function is as follows. Cell wall formation. In Rhodospirillum centenum (strain ATCC 51521 / SW), this protein is UDP-N-acetylmuramate--L-alanine ligase.